Reading from the N-terminus, the 363-residue chain is Sulfate/thiosulfate import ATP-binding protein CysA (363 aa).

The 235-residue stretch at 3–237 (IEINNISKYF…PATRFVLEFL (235 aa)) folds into the ABC transporter domain. 35 to 42 (GPSGSGKT) lines the ATP pocket.

It belongs to the ABC transporter superfamily. Sulfate/tungstate importer (TC 3.A.1.6) family. In terms of assembly, the complex is composed of two ATP-binding proteins (CysA), two transmembrane proteins (CysT and CysW) and a solute-binding protein (CysP).

The protein localises to the cell inner membrane. It carries out the reaction sulfate(out) + ATP + H2O = sulfate(in) + ADP + phosphate + H(+). The enzyme catalyses thiosulfate(out) + ATP + H2O = thiosulfate(in) + ADP + phosphate + H(+). In terms of biological role, part of the ABC transporter complex CysAWTP involved in sulfate/thiosulfate import. Responsible for energy coupling to the transport system. In Yersinia pestis, this protein is Sulfate/thiosulfate import ATP-binding protein CysA.